Consider the following 395-residue polypeptide: ATP phosphoribosyltransferase regulatory subunit (395 aa).

The protein belongs to the class-II aminoacyl-tRNA synthetase family. HisZ subfamily. In terms of assembly, heteromultimer composed of HisG and HisZ subunits.

Its subcellular location is the cytoplasm. It participates in amino-acid biosynthesis; L-histidine biosynthesis; L-histidine from 5-phospho-alpha-D-ribose 1-diphosphate: step 1/9. In terms of biological role, required for the first step of histidine biosynthesis. May allow the feedback regulation of ATP phosphoribosyltransferase activity by histidine. This Ectopseudomonas mendocina (strain ymp) (Pseudomonas mendocina) protein is ATP phosphoribosyltransferase regulatory subunit.